The primary structure comprises 468 residues: Cell division protein FtsA (468 aa).

The segment at 416 to 468 is disordered; it reads NKKDTHENEVESSDEEIYQSEDNHQEHKQNHEHVQDKDKEESKFKKLMKSLFE. The segment covering 425 to 434 has biased composition (acidic residues); it reads VESSDEEIYQ. The span at 436-459 shows a compositional bias: basic and acidic residues; the sequence is EDNHQEHKQNHEHVQDKDKEESKF.

It belongs to the FtsA/MreB family. In terms of assembly, self-interacts. Interacts with FtsZ.

The protein localises to the cell membrane. In terms of biological role, cell division protein that is involved in the assembly of the Z ring. May serve as a membrane anchor for the Z ring. This chain is Cell division protein FtsA, found in Staphylococcus aureus (strain MRSA252).